A 282-amino-acid polypeptide reads, in one-letter code: MAGAGLIGIRRRIKSVTNIRKITKAMGLVSTAKLRKARVNLEINKKYYNEYKIILKDIINFIEDSNIYIDGNGSHKKLYVIFTSDSGLCGSFNINIINNVINEIKEDKENSLVIVIGQKGRMYLKKLGINTLAEYIEIPDVPTTKEAGTIAKNIIKLYSSKEVGEVFLVYSEFYSPVKQQVLINKILPFTKENKSDNKYIEFNPPVTQLMDEILENYLKATILNCFSNSKASENGSRMTAMNGATDNANDLLDNLDLQFNRLRQSAITQEISEIVGGAEAQR.

Belongs to the ATPase gamma chain family. In terms of assembly, F-type ATPases have 2 components, CF(1) - the catalytic core - and CF(0) - the membrane proton channel. CF(1) has five subunits: alpha(3), beta(3), gamma(1), delta(1), epsilon(1). CF(0) has three main subunits: a, b and c.

Its subcellular location is the cell membrane. Its function is as follows. Produces ATP from ADP in the presence of a proton gradient across the membrane. The gamma chain is believed to be important in regulating ATPase activity and the flow of protons through the CF(0) complex. The protein is ATP synthase gamma chain of Clostridium botulinum (strain ATCC 19397 / Type A).